The chain runs to 507 residues: ATP synthase subunit alpha, chloroplastic (507 aa).

170–177 contacts ATP; sequence GDRQTGKT.

Belongs to the ATPase alpha/beta chains family. As to quaternary structure, F-type ATPases have 2 components, CF(1) - the catalytic core - and CF(0) - the membrane proton channel. CF(1) has five subunits: alpha(3), beta(3), gamma(1), delta(1), epsilon(1). CF(0) has four main subunits: a, b, b' and c.

Its subcellular location is the plastid. The protein resides in the chloroplast thylakoid membrane. The catalysed reaction is ATP + H2O + 4 H(+)(in) = ADP + phosphate + 5 H(+)(out). Produces ATP from ADP in the presence of a proton gradient across the membrane. The alpha chain is a regulatory subunit. This Chloranthus spicatus (Chulantree) protein is ATP synthase subunit alpha, chloroplastic.